Consider the following 499-residue polypeptide: Probable inactive receptor-like protein kinase At3g56050 (499 aa).

The signal sequence occupies residues 1–31 (MSNNWKSVRLRLQNRTLVFLLVILSFGSCYS). Asparagine 14 carries an N-linked (GlcNAc...) asparagine glycan. Topologically, residues 32–146 (LKSQGDGFLE…SKTSSNSTIP (115 aa)) are extracellular. A disordered region spans residues 80-121 (RDRPVARATPPSSSVSTRPDAKRSSTLPPPQKSPPAQHVSAP). An N-linked (GlcNAc...) asparagine glycan is attached at asparagine 142. The chain crosses the membrane as a helical span at residues 147–167 (IVAGCIAGAVFILLLATGVFF). Residues 168–499 (FKSKAGKSVN…WAELEVLSTA (332 aa)) lie on the Cytoplasmic side of the membrane. The 267-residue stretch at 208 to 474 (EDFSNVIGSC…EVTGRLREIT (267 aa)) folds into the Protein kinase domain.

The protein localises to the cell membrane. The sequence is that of Probable inactive receptor-like protein kinase At3g56050 from Arabidopsis thaliana (Mouse-ear cress).